A 520-amino-acid chain; its full sequence is Serine protease Hip1 (520 aa).

Positions 1–30 are cleaved as a signal peptide; sequence MGMRLSRRDKIARMLLIWAALAAVALVLVG. The N-palmitoyl cysteine moiety is linked to residue Cys-31. Cys-31 is lipidated: S-diacylglycerol cysteine. One can recognise an AB hydrolase-1 domain in the interval 102-497; sequence GSLVINPGGP…TQHTVVFQGD (396 aa). The active-site Nucleophile is the Ser-228. Asp-463 is a catalytic residue. His-490 acts as the Proton donor in catalysis.

It belongs to the peptidase S33 family.

It localises to the cell envelope. The protein localises to the cell membrane. Functionally, serine protease that promotes pathogenesis by promoting the processing and the extracellular release of the M.bovis heat-shock protein GroEL2. Its function is as follows. Key immunomodulatory virulence factor, which promotes survival in host macrophages and modulates host immune responses. This Mycobacterium bovis (strain ATCC BAA-935 / AF2122/97) protein is Serine protease Hip1.